A 644-amino-acid chain; its full sequence is Phosphatidylinositol polyphosphate 5-phosphatase type IV (644 aa).

The interval 1-193 is disordered; the sequence is MPSKAENLRP…RLPSLLPPRP (193 aa). Tandem repeats lie at residues 10 to 13, 15 to 18, 28 to 31, 39 to 42, 55 to 58, 69 to 71, 72 to 74, and 75 to 78. The tract at residues 10 to 242 is 13 X 4 AA repeats of P-X-X-P; the sequence is PSEPAPQPPE…SLGPGRPRSP (233 aa). Over residues 78-90 the composition is skewed to basic and acidic residues; the sequence is PRLERALSLDDKG. Residue S99 is modified to Phosphoserine. Residues 107-118 are compositionally biased toward polar residues; that stretch reads NGTSPSRGSVQS. The stretch at 121 to 124 is repeat 9; sequence PGAP. Residues 152 to 163 are compositionally biased toward low complexity; it reads GSPSSGGNPLSG. 4 consecutive repeat copies span residues 169 to 172, 183 to 185, 190 to 193, and 236 to 239. A phosphoserine mark is found at S241 and S256. C641 is subject to Cysteine methyl ester. The S-farnesyl cysteine moiety is linked to residue C641. The propeptide at 642-644 is removed in mature form; the sequence is SVS.

Belongs to the inositol polyphosphate 5-phosphatase family. As to quaternary structure, interacts (when prenylated) with PDE6D; this is important for normal location in cilia.

It localises to the cytoplasm. Its subcellular location is the cytoskeleton. The protein localises to the cilium axoneme. The protein resides in the golgi apparatus. It is found in the golgi stack membrane. It localises to the cell membrane. Its subcellular location is the cell projection. The protein localises to the ruffle. The protein resides in the nucleus. The catalysed reaction is a 1,2-diacyl-sn-glycero-3-phospho-(1D-myo-inositol-4,5-bisphosphate) + H2O = a 1,2-diacyl-sn-glycero-3-phospho-(1D-myo-inositol 4-phosphate) + phosphate. It catalyses the reaction a 1,2-diacyl-sn-glycero-3-phospho-(1D-myo-inositol-3,4,5-trisphosphate) + H2O = a 1,2-diacyl-sn-glycero-3-phospho-(1D-myo-inositol-3,4-bisphosphate) + phosphate. The enzyme catalyses a 1,2-diacyl-sn-glycero-3-phospho-(1D-myo-inositol-3,5-bisphosphate) + H2O = a 1,2-diacyl-sn-glycero-3-phospho-(1D-myo-inositol-3-phosphate) + phosphate. Phosphatidylinositol (PtdIns) phosphatase that specifically hydrolyzes the 5-phosphate of phosphatidylinositol-3,4,5-trisphosphate (PtdIns(3,4,5)P3), phosphatidylinositol 4,5-bisphosphate(PtdIns(4,5)P2) and phosphatidylinositol 3,5-bisphosphate (PtdIns(3,5)P2). Specific for lipid substrates, inactive towards water soluble inositol phosphates. Plays an essential role in the primary cilium by controlling ciliary growth and phosphoinositide 3-kinase (PI3K) signaling and stability. The polypeptide is Phosphatidylinositol polyphosphate 5-phosphatase type IV (INPP5E) (Pan troglodytes (Chimpanzee)).